The primary structure comprises 168 residues: Protein C2-DOMAIN ABA-RELATED 1 (168 aa).

Met-1 is modified (N-acetylmethionine). The region spanning Met-1 to Gly-104 is the C2 domain. Ca(2+) is bound by residues Arg-21, Asp-22, Asp-27, Asp-73, Tyr-74, Asp-75, and Asp-81.

This sequence belongs to the plant CAR protein family. As to quaternary structure, dimers and oligomers. Binds to PYR/PYL/RCAR abscisic acid intracellular receptors in an ABA-independent manner, both at the plasma membrane and in the nucleus. Interacts directly with PYR1, PYL1, PYL4, PYL6 and PYL8. Binds phospholipids in a Ca(2+)-dependent manner. Ca(2+) is required as a cofactor. As to expression, expressed in roots.

The protein resides in the cell membrane. The protein localises to the nucleus. Functionally, stimulates the GTPase/ATPase activities of Obg-like ATPases. Mediates the transient calcium-dependent interaction of PYR/PYL/RCAR abscisic acid (ABA) receptors with the plasma membrane and thus regulates ABA sensitivity. Binds liposomes in the absence of exogenous Ca(2+), but this activity is enhanced in the presence of Ca(2+) and generates membrane curvature. The protein is Protein C2-DOMAIN ABA-RELATED 1 of Arabidopsis thaliana (Mouse-ear cress).